A 518-amino-acid polypeptide reads, in one-letter code: 12S seed storage globulin 2 (518 aa).

An N-terminal signal peptide occupies residues 1 to 24 (MATTRFPSLLFYSYIFLLCNGSMA). 2 disulfide bridges follow: cysteine 45–cysteine 78 and cysteine 121–cysteine 324. The Cupin type-1 1 domain occupies 50–240 (LQAFEPLRQV…ALGISQQVAQ (191 aa)). A disordered region spans residues 280–311 (IQSQEEQSTQYQVGQSPQYQEGQSTQYQPGQS). The Cupin type-1 2 domain maps to 330–479 (QNIENPKRAD…AYRISRQEAQ (150 aa)). Residues 482–518 (KNNRGEEFDAFTPKFTQTGSQSYQDEGESSSTEKASE) are disordered. Residues 495–518 (KFTQTGSQSYQDEGESSSTEKASE) are compositionally biased toward polar residues.

Belongs to the 11S seed storage protein (globulins) family. Hexamer; each subunit is composed of an acidic and a basic chain derived from a single precursor and linked by a disulfide bond.

In terms of biological role, this is a seed storage protein. This is 12S seed storage globulin 2 from Avena sativa (Oat).